Consider the following 435-residue polypeptide: Proline--tRNA ligase (435 aa).

Belongs to the class-II aminoacyl-tRNA synthetase family. ProS type 2 subfamily. Homodimer.

The protein resides in the cytoplasm. The enzyme catalyses tRNA(Pro) + L-proline + ATP = L-prolyl-tRNA(Pro) + AMP + diphosphate. In terms of biological role, catalyzes the attachment of proline to tRNA(Pro) in a two-step reaction: proline is first activated by ATP to form Pro-AMP and then transferred to the acceptor end of tRNA(Pro). The polypeptide is Proline--tRNA ligase (proS) (Sulfurimonas denitrificans (strain ATCC 33889 / DSM 1251) (Thiomicrospira denitrificans (strain ATCC 33889 / DSM 1251))).